The chain runs to 339 residues: ATPase GET3 (339 aa).

Residue 34 to 41 (KGGVGKTT) coordinates ATP. The active site involves D63. 2 residues coordinate ATP: E243 and N270. Residues C281 and C284 each coordinate Zn(2+).

This sequence belongs to the arsA ATPase family. In terms of assembly, homodimer.

Its subcellular location is the cytoplasm. It localises to the endoplasmic reticulum. In terms of biological role, ATPase required for the post-translational delivery of tail-anchored (TA) proteins to the endoplasmic reticulum. Recognizes and selectively binds the transmembrane domain of TA proteins in the cytosol. This complex then targets to the endoplasmic reticulum by membrane-bound receptors, where the tail-anchored protein is released for insertion. This process is regulated by ATP binding and hydrolysis. ATP binding drives the homodimer towards the closed dimer state, facilitating recognition of newly synthesized TA membrane proteins. ATP hydrolysis is required for insertion. Subsequently, the homodimer reverts towards the open dimer state, lowering its affinity for the membrane-bound receptor, and returning it to the cytosol to initiate a new round of targeting. This is ATPase GET3 from Coccidioides immitis (strain RS) (Valley fever fungus).